Consider the following 688-residue polypeptide: PTS system glucoside-specific EIICBA component (688 aa).

The PTS EIIC type-1 domain occupies 3–427 (KKLFGQLQRI…FKLKTPGRED (425 aa)). 10 consecutive transmembrane segments (helical) span residues 12 to 32 (IGKALMLPVAILPAAGILLAF), 81 to 101 (LGLAGGDGVAALAALVGYLIM), 137 to 157 (LVLGIPTLQTGVFGGIIMGAL), 182 to 202 (FVPIVTSVVAIATGVLLSFAW), 223 to 243 (LTTFIFGIIERSLIPFGLHHI), 284 to 304 (AFTTGKYPFMMFGLPAAAFAI), 315 to 335 (VVGGLMLSAGLTAFLTGITEP), 340 to 360 (FLFVAPVLYGIHVLLAGTSFL), 364 to 384 (LLGVKIGMTFSGGFIDYILYG), and 395 to 415 (LVIPVGIVYAIVYYFLFDFAI). One can recognise a PTS EIIB type-1 domain in the interval 438-519 (AKLPFDVLDA…AKIMSGEITK (82 aa)). Catalysis depends on cysteine 460, which acts as the Phosphocysteine intermediate; for EIIB activity. The region spanning 560–664 (DQVFAGKMMG…SIVTPMIITN (105 aa)) is the PTS EIIA type-1 domain. The active-site Tele-phosphohistidine intermediate; for EIIA activity is the histidine 612.

It localises to the cell membrane. The phosphoenolpyruvate-dependent sugar phosphotransferase system (sugar PTS), a major carbohydrate active -transport system, catalyzes the phosphorylation of incoming sugar substrates concomitantly with their translocation across the cell membrane. This system is involved in alpha- and beta-glucoside transport. In Staphylococcus aureus (strain JH1), this protein is PTS system glucoside-specific EIICBA component (glcB).